Reading from the N-terminus, the 92-residue chain is Small ribosomal subunit protein uS19c (92 aa).

It belongs to the universal ribosomal protein uS19 family.

Its subcellular location is the plastid. It localises to the chloroplast. In terms of biological role, protein S19 forms a complex with S13 that binds strongly to the 16S ribosomal RNA. The protein is Small ribosomal subunit protein uS19c (rps19) of Anthoceros angustus (Hornwort).